The chain runs to 214 residues: 3-isopropylmalate dehydratase small subunit (214 aa).

This sequence belongs to the LeuD family. LeuD type 1 subfamily. As to quaternary structure, heterodimer of LeuC and LeuD.

It carries out the reaction (2R,3S)-3-isopropylmalate = (2S)-2-isopropylmalate. Its pathway is amino-acid biosynthesis; L-leucine biosynthesis; L-leucine from 3-methyl-2-oxobutanoate: step 2/4. Functionally, catalyzes the isomerization between 2-isopropylmalate and 3-isopropylmalate, via the formation of 2-isopropylmaleate. The protein is 3-isopropylmalate dehydratase small subunit of Pseudomonas putida (strain GB-1).